Consider the following 201-residue polypeptide: NAD(P)H-dependent FMN reductase ntnL (201 aa).

Residues arginine 12, glutamate 90 to glycine 93, and tyrosine 120 each bind FMN.

As to quaternary structure, homodimer.

The catalysed reaction is FMNH2 + NADP(+) = FMN + NADPH + 2 H(+). It catalyses the reaction FMNH2 + NAD(+) = FMN + NADH + 2 H(+). It participates in secondary metabolite biosynthesis; terpenoid biosynthesis. In terms of biological role, NAD(P)H-dependent FMN reductase; part of the gene cluster that mediates the biosynthesis of the meroterpenoids nectripenoids A and B, as well as cochliquninone D and isocochliquninone E. The pathway probably begins with the HR-PKS ntnH that catalyzes two chain-extension steps to form a reduced triketide, which then primes the SAT domain in the NR-PKS ntnG to initiate three more cycles of extension to give a linear hexaketide corresponding to the polyketide part of nectripenoids. The FAD-dependent monooxygenase ntnJ then performs an oxidative decarboxylation at C11 of the ntnH/ntnG product, via an electrophilic aromatic hydroxylation with concomitant ipso-decarboxylation. The membrane-bound polyprenyl transferase ntnF then introduces a farnesyl group before the FAD-dependent monooxygenase ntnK functions as the first epoxidase on terminal C12'-C13' olefin, followed by a second epoxidation on C7'-C8' catalyzed by ntnA. The terpene cyclase/mutase ntnI then initiates the sequential tricyclic ring formation through protonation of the terminal epoxide and catalyzes the regioselective and stereoselective 6/6/6-tricyclic ring formation. The cytochrome P450 monooxygenase ntnM may then hydroxylate C1'. This chain is NAD(P)H-dependent FMN reductase ntnL, found in Nectria sp.